The chain runs to 670 residues: MTIFDSDEEELVTTLSDFEPPVQIDTSFNKFIVVDNIPVAPEAKHEKLKSILVKIYQNRPGAEVVGIHLALDAQRNTKGFAFIEYSKKESAIDAATSLNNYPLDKSHTLKVNLLDDFSKFANFEETYKPPTREDFKPKPNYNQWLSDPKALKGYDQFVTRYGDYTDICWNEMHVGKPMVEKSSVSLTSSYVQWSNTGSYLVTFHPDGIALYGGKDWIQVNLFEHRGVQLVDFSPEDKYLITFAPIASDNPNSPKSIVVWDVRSGKKLRSFLAPPKEQFTWPAFQWSAKDKYIARIEQLEKGINIYETPSMNLLDDKIFEVKGIKDFSWSPTDLSLAYFVPANDPLPAKICLVEMPSKKLLAEKSIWGATDARFHWQNEGAYLCVKTDKVATGKTKKEKIPTTSFELFRTHEPNVPIESFEIQYAIKAFSWEPRGKRICIIHGEFKMNMFVSFFEVQKTSVKLISKLENRKLNTIFWSPRGTLVLLANLGDTGELEFYNTQDCESYGTQEHLQCTGVDWNPSGRYVTTFVSHWKVQTDTGFNIWSFNGDLVYSVLKDRFFQFNWRPRPKFMLTNKEINQIKQNIKKYQEKFDKQDEDDNKAIQHIEQTRLDNLMKEFLSFLQKGEQEYQALEPTRKQLGSYEDIDPNDIYESIETIEELIDIKTIVLKKIN.

The region spanning 30–116 is the RRM domain; it reads KFIVVDNIPV…HTLKVNLLDD (87 aa). 4 WD repeats span residues 183-221, 222-269, 466-507, and 509-553; these read SVSL…QVNL, FEHR…KLRS, LENR…SYGT, and EHLQ…VYSV. The stretch at 568–600 forms a coiled coil; the sequence is KFMLTNKEINQIKQNIKKYQEKFDKQDEDDNKA.

This sequence belongs to the eIF-3 subunit B family. Component of the eukaryotic translation initiation factor 3 (eIF-3) complex.

Its subcellular location is the cytoplasm. RNA-binding component of the eukaryotic translation initiation factor 3 (eIF-3) complex, which is involved in protein synthesis of a specialized repertoire of mRNAs and, together with other initiation factors, stimulates binding of mRNA and methionyl-tRNAi to the 40S ribosome. The eIF-3 complex specifically targets and initiates translation of a subset of mRNAs involved in cell proliferation. This Dictyostelium discoideum (Social amoeba) protein is Eukaryotic translation initiation factor 3 subunit B (eif3B).